The chain runs to 91 residues: Probable translocation protein y4yM (91 aa).

Transmembrane regions (helical) follow at residues 15–35 (VVFMIWILPPLIASVIVGLTI) and 55–75 (LLVVVAVIGLFAPVLSAPLIE).

This sequence belongs to the FliQ/MopD/SpaQ family.

It localises to the cell membrane. Could be involved in the secretion of an unknown factor. The sequence is that of Probable translocation protein y4yM from Sinorhizobium fredii (strain NBRC 101917 / NGR234).